A 695-amino-acid polypeptide reads, in one-letter code: Nucleoprotein (695 aa).

Coiled-coil stretches lie at residues 316–341 (VNVGEQYQQLREAAHDAEVKLQRRHE) and 372–399 (QTLAVLSQKREKLARLAAEIENNIVEDQ). 2 disordered regions span residues 424-458 (QARPVNRPTALPPPVDDKIEHESTEDSSSSSSFVD) and 483-615 (TSRE…AREA). Residues 438 to 447 (VDDKIEHEST) show a composition bias toward basic and acidic residues. 2 stretches are compositionally biased toward polar residues: residues 494-505 (PGQSQDLDNSQG) and 537-552 (TTDSQESIDQPGSDNE). The PTAP/PSAP motif motif lies at 603-606 (PSAP).

The protein belongs to the filoviruses nucleoprotein family. In terms of assembly, homooligomer. Homomultimerizes to form the nucleocapsid. Binds to viral genomic RNA. Interacts with VP35 and VP30 to form the nucleocapsid. Also interacts with VP24 and VP40. Post-translationally, phosphorylated.

Its subcellular location is the virion. It localises to the host cytoplasm. In terms of biological role, encapsidates the genome, protecting it from nucleases. The encapsidated genomic RNA is termed the nucleocapsid and serves as template for transcription and replication. During replication, encapsidation by NP is coupled to RNA synthesis and all replicative products are resistant to nucleases. The polypeptide is Nucleoprotein (NP) (Lake Victoria marburgvirus (strain Ozolin-75) (MARV)).